The sequence spans 177 residues: Transcription termination/antitermination protein NusG (177 aa).

Residues 126-156 enclose the KOW domain; sequence PGETVRVIDGPFADFNGVVEEVNYEKSRIQV.

The protein belongs to the NusG family.

Its function is as follows. Participates in transcription elongation, termination and antitermination. In Pseudomonas aeruginosa (strain ATCC 15692 / DSM 22644 / CIP 104116 / JCM 14847 / LMG 12228 / 1C / PRS 101 / PAO1), this protein is Transcription termination/antitermination protein NusG.